The chain runs to 1487 residues: Protein cft1 (1487 aa).

Residues aspartate 486–glycine 504 show a composition bias toward acidic residues. The interval aspartate 486–alanine 513 is disordered.

It belongs to the CFT1 family.

It is found in the nucleus. Functionally, RNA-binding component of the cleavage and polyadenylation factor (CPF) complex, which plays a key role in polyadenylation-dependent pre-mRNA 3'-end formation and cooperates with cleavage factors including the CFIA complex and hrp1/CFIB. Involved in poly(A) site recognition. May be involved in coupling transcription termination and mRNA 3'-end formation. The protein is Protein cft1 (paa-3) of Neurospora crassa (strain ATCC 24698 / 74-OR23-1A / CBS 708.71 / DSM 1257 / FGSC 987).